The chain runs to 161 residues: Cytochrome c-type biogenesis protein CcmE (161 aa).

Over 1–8 the chain is Cytoplasmic; it reads MNPRRKKR. The helical; Signal-anchor for type II membrane protein transmembrane segment at 9 to 29 threads the bilayer; it reads LGIVLAIFIGISATIGLMLYA. The Periplasmic portion of the chain corresponds to 30-161; sequence LNQNMDLFYT…SSEQKQGSGE (132 aa). Heme-binding residues include histidine 129 and tyrosine 133. Residues 142-161 form a disordered region; it reads MKKTHEPLQYSSEQKQGSGE. Residues 150–161 are compositionally biased toward polar residues; that stretch reads QYSSEQKQGSGE.

This sequence belongs to the CcmE/CycJ family.

The protein resides in the cell inner membrane. Heme chaperone required for the biogenesis of c-type cytochromes. Transiently binds heme delivered by CcmC and transfers the heme to apo-cytochromes in a process facilitated by CcmF and CcmH. In Vibrio parahaemolyticus serotype O3:K6 (strain RIMD 2210633), this protein is Cytochrome c-type biogenesis protein CcmE.